A 913-amino-acid chain; its full sequence is Zinc finger protein 112 (913 aa).

One can recognise a KRAB domain in the interval Val-8–Ser-79. Lys-256 participates in a covalent cross-link: Glycyl lysine isopeptide (Lys-Gly) (interchain with G-Cter in SUMO2). The C2H2-type 1; degenerate zinc finger occupies Tyr-258–His-280. The C2H2-type 2; degenerate zinc finger occupies Tyr-443 to His-465. The segment at Tyr-471 to His-493 adopts a C2H2-type 3; degenerate zinc-finger fold. The C2H2-type 4; degenerate zinc finger occupies Lys-497–His-519. 13 C2H2-type zinc fingers span residues Tyr-525–His-547, Tyr-553–His-575, Tyr-581–His-603, Tyr-609–His-631, Phe-637–His-659, Tyr-665–His-687, Tyr-693–His-715, Tyr-721–His-743, Tyr-749–His-771, Tyr-777–His-799, Tyr-805–His-827, Tyr-833–His-855, and Tyr-861–His-883. A Glycyl lysine isopeptide (Lys-Gly) (interchain with G-Cter in SUMO2) cross-link involves residue Lys-890.

Belongs to the krueppel C2H2-type zinc-finger protein family.

Its subcellular location is the nucleus. In terms of biological role, may be involved in transcriptional regulation. The protein is Zinc finger protein 112 (ZNF112) of Homo sapiens (Human).